A 257-amino-acid chain; its full sequence is Deoxyribose-phosphate aldolase (257 aa).

Asp102 functions as the Proton donor/acceptor in the catalytic mechanism. Catalysis depends on Lys166, which acts as the Schiff-base intermediate with acetaldehyde. The active-site Proton donor/acceptor is the Lys198.

Belongs to the DeoC/FbaB aldolase family. DeoC type 2 subfamily.

The protein resides in the cytoplasm. The catalysed reaction is 2-deoxy-D-ribose 5-phosphate = D-glyceraldehyde 3-phosphate + acetaldehyde. Its pathway is carbohydrate degradation; 2-deoxy-D-ribose 1-phosphate degradation; D-glyceraldehyde 3-phosphate and acetaldehyde from 2-deoxy-alpha-D-ribose 1-phosphate: step 2/2. Catalyzes a reversible aldol reaction between acetaldehyde and D-glyceraldehyde 3-phosphate to generate 2-deoxy-D-ribose 5-phosphate. This chain is Deoxyribose-phosphate aldolase, found in Shewanella halifaxensis (strain HAW-EB4).